The primary structure comprises 290 residues: 33 kDa chaperonin (290 aa).

Disulfide bonds link Cys-235-Cys-237 and Cys-268-Cys-271.

Belongs to the HSP33 family. In terms of processing, under oxidizing conditions two disulfide bonds are formed involving the reactive cysteines. Under reducing conditions zinc is bound to the reactive cysteines and the protein is inactive.

Its subcellular location is the cytoplasm. In terms of biological role, redox regulated molecular chaperone. Protects both thermally unfolding and oxidatively damaged proteins from irreversible aggregation. Plays an important role in the bacterial defense system toward oxidative stress. This chain is 33 kDa chaperonin, found in Streptococcus pyogenes serotype M5 (strain Manfredo).